The primary structure comprises 262 residues: Thiazole synthase (262 aa).

K97 serves as the catalytic Schiff-base intermediate with DXP. 1-deoxy-D-xylulose 5-phosphate contacts are provided by residues G158, 185-186, and 207-208; these read AG and NT. Positions 243–262 are disordered; sequence DKAQASTPTVGQPFWHSAEY.

Belongs to the ThiG family. Homotetramer. Forms heterodimers with either ThiH or ThiS.

It is found in the cytoplasm. It catalyses the reaction [ThiS sulfur-carrier protein]-C-terminal-Gly-aminoethanethioate + 2-iminoacetate + 1-deoxy-D-xylulose 5-phosphate = [ThiS sulfur-carrier protein]-C-terminal Gly-Gly + 2-[(2R,5Z)-2-carboxy-4-methylthiazol-5(2H)-ylidene]ethyl phosphate + 2 H2O + H(+). It participates in cofactor biosynthesis; thiamine diphosphate biosynthesis. In terms of biological role, catalyzes the rearrangement of 1-deoxy-D-xylulose 5-phosphate (DXP) to produce the thiazole phosphate moiety of thiamine. Sulfur is provided by the thiocarboxylate moiety of the carrier protein ThiS. In vitro, sulfur can be provided by H(2)S. This Neisseria meningitidis serogroup A / serotype 4A (strain DSM 15465 / Z2491) protein is Thiazole synthase.